The sequence spans 1203 residues: DNA-directed RNA polymerase subunit beta' (1203 aa).

Zn(2+) contacts are provided by C60, C62, C75, and C78. The Mg(2+) site is built by D449, D451, and D453. C818, C892, C899, and C902 together coordinate Zn(2+).

It belongs to the RNA polymerase beta' chain family. In terms of assembly, the RNAP catalytic core consists of 2 alpha, 1 beta, 1 beta' and 1 omega subunit. When a sigma factor is associated with the core the holoenzyme is formed, which can initiate transcription. Requires Mg(2+) as cofactor. It depends on Zn(2+) as a cofactor.

It catalyses the reaction RNA(n) + a ribonucleoside 5'-triphosphate = RNA(n+1) + diphosphate. Functionally, DNA-dependent RNA polymerase catalyzes the transcription of DNA into RNA using the four ribonucleoside triphosphates as substrates. This chain is DNA-directed RNA polymerase subunit beta', found in Bacillus anthracis.